Reading from the N-terminus, the 213-residue chain is Imidazole glycerol phosphate synthase subunit HisH (213 aa).

The Glutamine amidotransferase type-1 domain occupies 1 to 212 (MLAILDYKAG…HRYCTEAADA (212 aa)). The active-site Nucleophile is the Cys79. Residues His187 and Glu189 contribute to the active site.

Heterodimer of HisH and HisF.

Its subcellular location is the cytoplasm. It carries out the reaction 5-[(5-phospho-1-deoxy-D-ribulos-1-ylimino)methylamino]-1-(5-phospho-beta-D-ribosyl)imidazole-4-carboxamide + L-glutamine = D-erythro-1-(imidazol-4-yl)glycerol 3-phosphate + 5-amino-1-(5-phospho-beta-D-ribosyl)imidazole-4-carboxamide + L-glutamate + H(+). It catalyses the reaction L-glutamine + H2O = L-glutamate + NH4(+). The protein operates within amino-acid biosynthesis; L-histidine biosynthesis; L-histidine from 5-phospho-alpha-D-ribose 1-diphosphate: step 5/9. Its function is as follows. IGPS catalyzes the conversion of PRFAR and glutamine to IGP, AICAR and glutamate. The HisH subunit catalyzes the hydrolysis of glutamine to glutamate and ammonia as part of the synthesis of IGP and AICAR. The resulting ammonia molecule is channeled to the active site of HisF. The sequence is that of Imidazole glycerol phosphate synthase subunit HisH from Nitratidesulfovibrio vulgaris (strain DP4) (Desulfovibrio vulgaris).